The following is a 305-amino-acid chain: Probable GTP 3',8-cyclase (305 aa).

The Radical SAM core domain maps to 6–228; the sequence is NHRRPLVSLR…MTRKFMQDRK (223 aa). Arg-15 is a GTP binding site. Residues Cys-22 and Cys-26 each contribute to the [4Fe-4S] cluster site. Tyr-28 is an S-adenosyl-L-methionine binding site. Residue Cys-29 coordinates [4Fe-4S] cluster. Arg-62 contacts GTP. Gly-66 contacts S-adenosyl-L-methionine. Thr-92 contributes to the GTP binding site. Ser-116 provides a ligand contact to S-adenosyl-L-methionine. A GTP-binding site is contributed by Lys-153. Positions 249 and 252 each coordinate [4Fe-4S] cluster. Position 254–256 (254–256) interacts with GTP; the sequence is RLR. Residue Cys-266 participates in [4Fe-4S] cluster binding.

It belongs to the radical SAM superfamily. MoaA family. [4Fe-4S] cluster serves as cofactor.

It catalyses the reaction GTP + AH2 + S-adenosyl-L-methionine = (8S)-3',8-cyclo-7,8-dihydroguanosine 5'-triphosphate + 5'-deoxyadenosine + L-methionine + A + H(+). It participates in cofactor biosynthesis; molybdopterin biosynthesis. In terms of biological role, catalyzes the cyclization of GTP to (8S)-3',8-cyclo-7,8-dihydroguanosine 5'-triphosphate. The sequence is that of Probable GTP 3',8-cyclase from Methanothermobacter marburgensis (strain ATCC BAA-927 / DSM 2133 / JCM 14651 / NBRC 100331 / OCM 82 / Marburg) (Methanobacterium thermoautotrophicum).